The chain runs to 428 residues: Enolase (428 aa).

Gln163 serves as a coordination point for (2R)-2-phosphoglycerate. The active-site Proton donor is Glu205. Mg(2+)-binding residues include Asp242, Glu285, and Asp312. Lys337, Arg366, Ser367, and Lys388 together coordinate (2R)-2-phosphoglycerate. Residue Lys337 is the Proton acceptor of the active site.

The protein belongs to the enolase family. Mg(2+) serves as cofactor.

It is found in the cytoplasm. The protein localises to the secreted. The protein resides in the cell surface. The catalysed reaction is (2R)-2-phosphoglycerate = phosphoenolpyruvate + H2O. The protein operates within carbohydrate degradation; glycolysis; pyruvate from D-glyceraldehyde 3-phosphate: step 4/5. Its function is as follows. Catalyzes the reversible conversion of 2-phosphoglycerate (2-PG) into phosphoenolpyruvate (PEP). It is essential for the degradation of carbohydrates via glycolysis. This chain is Enolase, found in Neisseria meningitidis serogroup C / serotype 2a (strain ATCC 700532 / DSM 15464 / FAM18).